A 398-amino-acid chain; its full sequence is Organelle RRM domain-containing protein 1, chloroplastic (398 aa).

A chloroplast-targeting transit peptide spans 1-88 (MDTALPSVLI…RWVVVMDTPP (88 aa)). A compositionally biased stretch (low complexity) spans 54 to 70 (LLASSSESPPAQLAAAS). The interval 54–79 (LLASSSESPPAQLAAASTESQSRSSR) is disordered. The region spanning 299–377 (KRLFVTGLSF…WMIVVDVAKT (79 aa)) is the RRM domain.

The protein localises to the plastid. It localises to the chloroplast. In terms of biological role, involved in C-to-U editing of chloroplastic RNA. Functions as major chloroplastic editing factor. Controls a majority of the chloroplastic editing sites. The polypeptide is Organelle RRM domain-containing protein 1, chloroplastic (ORRM1) (Zea mays (Maize)).